The chain runs to 433 residues: Keratin, type I cytoskeletal 17 (433 aa).

The interval 1-24 (MTTTIRQFTSSSSIKGSSGLGGGS) is disordered. A head region spans residues 1-83 (MTTTIRQFTS…GGVDGLLAGG (83 aa)). Residues serine 12 and serine 13 each carry the phosphoserine modification. Lysine 15 is covalently cross-linked (Glycyl lysine isopeptide (Lys-Gly) (interchain with G-Cter in SUMO1); alternate). A Glycyl lysine isopeptide (Lys-Gly) (interchain with G-Cter in SUMO2); alternate cross-link involves residue lysine 15. Phosphoserine occurs at positions 25, 32, 34, and 39. A Phosphoserine; by RPS6KA1 modification is found at serine 44. Residues 84–120 (EKATMQNLNDRLASYLDKVRALEEANTELEVKIRDWY) form a coil 1A region. Positions 84 to 395 (EKATMQNLND…RLLEGEDAHL (312 aa)) constitute an IF rod domain. Threonine 110 bears the Phosphothreonine mark. A linker 1 region spans residues 121-138 (QKQAPGPARDYSAYYHTI). The segment at 139–230 (EDLKNKILVA…NHEEEMNALR (92 aa)) is coil 1B. Residues 231–250 (GQVGGEINVEMDAAPGVDLS) form a linker 12 region. The segment at 251–392 (RILSEMRDQY…TYRRLLEGED (142 aa)) is coil 2. Lysine 278 participates in a covalent cross-link: Glycyl lysine isopeptide (Lys-Gly) (interchain with G-Cter in SUMO2). Threonine 279 carries the phosphothreonine modification. Position 323 is a phosphoserine (serine 323). Residues 393–433 (AHLTQYKPKEPVTTRQVRTIVEEVQDGKVISSREQVHQTTR) form a tail region. Glycyl lysine isopeptide (Lys-Gly) (interchain with G-Cter in SUMO1); alternate cross-links involve residues lysine 399, lysine 401, and lysine 420. Glycyl lysine isopeptide (Lys-Gly) (interchain with G-Cter in SUMO2); alternate cross-links involve residues lysine 399, lysine 401, and lysine 420.

Belongs to the intermediate filament family. Heterodimer of a type I and a type II keratin. KRT17 associates with KRT6 isomers (KRT6A or KRT6B). Interacts with TRADD and SFN. Phosphorylation at Ser-44 occurs in a growth- and stress-dependent fashion in skin keratinocytes, it has no effect on filament organization. As to expression, expressed strongly in outer root sheath and medulla region of hair follicle and in the early differentiating epithelial cells (trichocytes) within the hair bulb region. Weak expression in the matrix cells of hair bulb. Also present in the sweat gland within the skin, vibrissae follicle, salivary gland, tooth and thymus.

It is found in the cytoplasm. Type I keratin involved in the formation and maintenance of various skin appendages, specifically in determining shape and orientation of hair. Required for the correct growth of hair follicles, in particular for the persistence of the anagen (growth) state. Modulates the function of TNF-alpha in the specific context of hair cycling. Regulates protein synthesis and epithelial cell growth through binding to the adapter protein SFN and by stimulating Akt/mTOR pathway. Involved in tissue repair. May be a marker of basal cell differentiation in complex epithelia and therefore indicative of a certain type of epithelial 'stem cells'. Acts as a promoter of epithelial proliferation by acting a regulator of immune response in skin: promotes Th1/Th17-dominated immune environment contributing to the development of basaloid skin tumors. May act as an autoantigen in the immunopathogenesis of psoriasis, with certain peptide regions being a major target for autoreactive T-cells and hence causing their proliferation. This is Keratin, type I cytoskeletal 17 (Krt17) from Mus musculus (Mouse).